An 891-amino-acid chain; its full sequence is Schlafen family member 5 (891 aa).

Lys-59 is covalently cross-linked (Glycyl lysine isopeptide (Lys-Gly) (interchain with G-Cter in SUMO2)). 578-585 is a binding site for ATP; it reads GLPGSGKT.

The protein belongs to the Schlafen family. Subgroup III subfamily.

May have a role in hematopoietic cell differentiation. This is Schlafen family member 5 (SLFN5) from Homo sapiens (Human).